A 684-amino-acid polypeptide reads, in one-letter code: MRFWYFSAILWVVCQALPSKKQYSVAPELLPGLSEIEDKSTIPEMYAGHMPLAQSNSDDKDEIDYFFWKFSRPDKVLNTLIIWLNGGPGCSSMDGALVENGPFRVNKDLKLVVNEGSWHTRADMLYVDQPVNTGFSVSNSKEKKYDEDLTLTTQHFMDFLESYFKVFPDDQFKDLIIAGESYSGQYVPFLAEAIQKRNAETSDDLAKYNLRGILVGNGWMDPDTQSLAYLPFALSKGLIDQNNPHFSTLLRQQEKCQDRIISRNPNEHQPFQYEECENILQSILTATRDVSADTPSNQVCMNIYSYNLRDSYPACGSNWPDEVLHVPGFFDRPGILEALNLDPSKVPQWKECNLEVYYHLKNRKAVPSVRKLPALLDSGLKVILYNGEMDLLCNERGVLDMIDKLQWGGAKGFSSKTKEYDWNYRDFETNTDHIAGNVLHDRNLTYISVHNASHMVPNDKSLYSRGVVDIYLDDIFLEELHGKDVLVTTSEKDMDDFDNSKLGVLGITDGKPSEEEELEEEFDQYVDELEEGESESGLLDDDKEDETVGATDQNDDKNKGGEDKPNENPDKEKEEQDRQRKRRKGTFKIFGITILVVLTLGSFVFYIYIRKHTNKTRAILIDPSRRQHDSQNKRVSWADDLEHGYDFETDQSQPRSGQSAPKKNGSYTRVPNTELDESFELENL.

The first 16 residues, 1–16 (MRFWYFSAILWVVCQA), serve as a signal peptide directing secretion. The Lumenal segment spans residues 17-588 (LPSKKQYSVA…QRKRRKGTFK (572 aa)). Residues Ser-181 and Asp-390 contribute to the active site. N-linked (GlcNAc...) asparagine glycosylation is found at Asn-443 and Asn-451. His-454 is an active-site residue. The tract at residues 498–582 (DNSKLGVLGI…KEEQDRQRKR (85 aa)) is disordered. A compositionally biased stretch (acidic residues) spans 514–547 (EEEELEEEFDQYVDELEEGESESGLLDDDKEDET). A compositionally biased stretch (basic and acidic residues) spans 554–578 (NDDKNKGGEDKPNENPDKEKEEQDR). A helical membrane pass occupies residues 589-609 (IFGITILVVLTLGSFVFYIYI). Residues 610 to 684 (RKHTNKTRAI…LDESFELENL (75 aa)) lie on the Cytoplasmic side of the membrane. The disordered stretch occupies residues 641–684 (LEHGYDFETDQSQPRSGQSAPKKNGSYTRVPNTELDESFELENL). The segment covering 650 to 671 (DQSQPRSGQSAPKKNGSYTRVP) has biased composition (polar residues). Residues 674 to 684 (ELDESFELENL) show a composition bias toward acidic residues.

This sequence belongs to the peptidase S10 family.

It is found in the golgi apparatus. The protein resides in the trans-Golgi network membrane. It catalyses the reaction Preferential release of a C-terminal arginine or lysine residue.. Its function is as follows. Protease with a carboxypeptidase B-like function involved in the C-terminal processing of the lysine and arginine residues from protein precursors. Promotes cell fusion and is involved in the programmed cell death. The chain is Pheromone-processing carboxypeptidase KEX1 (KEX1) from Zygosaccharomyces rouxii (strain ATCC 2623 / CBS 732 / NBRC 1130 / NCYC 568 / NRRL Y-229).